Reading from the N-terminus, the 149-residue chain is Cyanate hydratase (149 aa).

Active-site residues include R90, E93, and S116.

This sequence belongs to the cyanase family.

The catalysed reaction is cyanate + hydrogencarbonate + 3 H(+) = NH4(+) + 2 CO2. Catalyzes the reaction of cyanate with bicarbonate to produce ammonia and carbon dioxide. The protein is Cyanate hydratase of Synechocystis sp. (strain ATCC 27184 / PCC 6803 / Kazusa).